The primary structure comprises 307 residues: UDP-3-O-acyl-N-acetylglucosamine deacetylase (307 aa).

Residues histidine 78, histidine 241, and aspartate 245 each coordinate Zn(2+). The Proton donor role is filled by histidine 268.

The protein belongs to the LpxC family. Requires Zn(2+) as cofactor.

The catalysed reaction is a UDP-3-O-[(3R)-3-hydroxyacyl]-N-acetyl-alpha-D-glucosamine + H2O = a UDP-3-O-[(3R)-3-hydroxyacyl]-alpha-D-glucosamine + acetate. The protein operates within glycolipid biosynthesis; lipid IV(A) biosynthesis; lipid IV(A) from (3R)-3-hydroxytetradecanoyl-[acyl-carrier-protein] and UDP-N-acetyl-alpha-D-glucosamine: step 2/6. In terms of biological role, catalyzes the hydrolysis of UDP-3-O-myristoyl-N-acetylglucosamine to form UDP-3-O-myristoylglucosamine and acetate, the committed step in lipid A biosynthesis. In Acidovorax sp. (strain JS42), this protein is UDP-3-O-acyl-N-acetylglucosamine deacetylase.